A 174-amino-acid polypeptide reads, in one-letter code: MALLEIIHYPSKILRTISKEVVSFDSKLHQQLDDMHETMIASEGIGLAAIQVGLPLRMLIINLPQEDGVQHKEDCLEIINPKWIETKGSIMYREGCLSVPGFYEEVERFEKVKIEYQNRFAEVKILEASELLAVAIQHEIDHLNGVLFVDKLSILKRKKFEKELKELQKKQKHK.

Fe cation contacts are provided by cysteine 96 and histidine 138. Residue glutamate 139 is part of the active site. Histidine 142 is a binding site for Fe cation.

It belongs to the polypeptide deformylase family. Fe(2+) serves as cofactor.

The enzyme catalyses N-terminal N-formyl-L-methionyl-[peptide] + H2O = N-terminal L-methionyl-[peptide] + formate. Removes the formyl group from the N-terminal Met of newly synthesized proteins. Requires at least a dipeptide for an efficient rate of reaction. N-terminal L-methionine is a prerequisite for activity but the enzyme has broad specificity at other positions. This is Peptide deformylase from Helicobacter pylori (strain J99 / ATCC 700824) (Campylobacter pylori J99).